The primary structure comprises 643 residues: Translation factor GUF1, mitochondrial (643 aa).

A mitochondrion-targeting transit peptide spans 1–18 (MLASQAIKRIFHRSWKPL). The region spanning 43–226 (ENYRNFSIVA…AIIDRIPPPT (184 aa)) is the tr-type G domain. Residues 52-59 (AHIDHGKS), 118-122 (DTPGH), and 172-175 (NKID) each bind GTP.

This sequence belongs to the TRAFAC class translation factor GTPase superfamily. Classic translation factor GTPase family. LepA subfamily.

Its subcellular location is the mitochondrion inner membrane. It carries out the reaction GTP + H2O = GDP + phosphate + H(+). Its function is as follows. Promotes mitochondrial protein synthesis. May act as a fidelity factor of the translation reaction, by catalyzing a one-codon backward translocation of tRNAs on improperly translocated ribosomes. Binds to mitochondrial ribosomes in a GTP-dependent manner. The sequence is that of Translation factor GUF1, mitochondrial from Zygosaccharomyces rouxii (strain ATCC 2623 / CBS 732 / NBRC 1130 / NCYC 568 / NRRL Y-229).